A 208-amino-acid polypeptide reads, in one-letter code: Large ribosomal subunit protein bL25 (208 aa).

It belongs to the bacterial ribosomal protein bL25 family. CTC subfamily. Part of the 50S ribosomal subunit; part of the 5S rRNA/L5/L18/L25 subcomplex. Contacts the 5S rRNA. Binds to the 5S rRNA independently of L5 and L18.

This is one of the proteins that binds to the 5S RNA in the ribosome where it forms part of the central protuberance. In Bartonella quintana (strain Toulouse) (Rochalimaea quintana), this protein is Large ribosomal subunit protein bL25.